Here is a 170-residue protein sequence, read N- to C-terminus: Adenine phosphoribosyltransferase (170 aa).

Belongs to the purine/pyrimidine phosphoribosyltransferase family. Homodimer.

The protein localises to the cytoplasm. It carries out the reaction AMP + diphosphate = 5-phospho-alpha-D-ribose 1-diphosphate + adenine. It participates in purine metabolism; AMP biosynthesis via salvage pathway; AMP from adenine: step 1/1. Catalyzes a salvage reaction resulting in the formation of AMP, that is energically less costly than de novo synthesis. In Bacillus mycoides (strain KBAB4) (Bacillus weihenstephanensis), this protein is Adenine phosphoribosyltransferase.